The following is a 177-amino-acid chain: Neuroblastoma suppressor of tumorigenicity 1 (177 aa).

Residues 1–16 form the signal peptide; the sequence is MLWFVVGALFPALLLA. 5 disulfides stabilise this stretch: Cys34/Cys84, Cys48/Cys98, Cys58/Cys117, Cys62/Cys119, and Cys81/Cys122. Residues 34-123 form the CTCK domain; the sequence is CEAKNITQIV…ILHCSCQACG (90 aa). The disordered stretch occupies residues 143 to 177; it reads MPAEGPGPHHYAHHQQEVEEPPASSHHHHEEEGDE.

It belongs to the DAN family.

The protein resides in the secreted. In terms of biological role, may act as a tumor suppressor. The polypeptide is Neuroblastoma suppressor of tumorigenicity 1 (NBL1) (Gallus gallus (Chicken)).